We begin with the raw amino-acid sequence, 288 residues long: Pantothenate synthetase (288 aa).

31–38 (MGNLHRGH) contributes to the ATP binding site. H38 (proton donor) is an active-site residue. (R)-pantoate is bound at residue Q62. Q62 is a beta-alanine binding site. 150–153 (GQKD) is an ATP binding site. Q156 serves as a coordination point for (R)-pantoate. Residues I179 and 187–190 (LSSR) each bind ATP.

The protein belongs to the pantothenate synthetase family. In terms of assembly, homodimer.

It localises to the cytoplasm. The catalysed reaction is (R)-pantoate + beta-alanine + ATP = (R)-pantothenate + AMP + diphosphate + H(+). It functions in the pathway cofactor biosynthesis; (R)-pantothenate biosynthesis; (R)-pantothenate from (R)-pantoate and beta-alanine: step 1/1. Functionally, catalyzes the condensation of pantoate with beta-alanine in an ATP-dependent reaction via a pantoyl-adenylate intermediate. The sequence is that of Pantothenate synthetase from Wigglesworthia glossinidia brevipalpis.